A 60-amino-acid polypeptide reads, in one-letter code: Large ribosomal subunit protein bL32 (60 aa).

This sequence belongs to the bacterial ribosomal protein bL32 family.

The sequence is that of Large ribosomal subunit protein bL32 from Thermosipho melanesiensis (strain DSM 12029 / CIP 104789 / BI429).